Reading from the N-terminus, the 527-residue chain is Lysine--tRNA ligase (527 aa).

Residues 44 to 52 carry the 'HIGH' region motif; it reads PSGLPHIGT. Residues 290–294 carry the 'KMSKS' region motif; the sequence is KISKS. Lysine 293 lines the ATP pocket.

It belongs to the class-I aminoacyl-tRNA synthetase family.

Its subcellular location is the cytoplasm. It carries out the reaction tRNA(Lys) + L-lysine + ATP = L-lysyl-tRNA(Lys) + AMP + diphosphate. In Roseobacter denitrificans (strain ATCC 33942 / OCh 114) (Erythrobacter sp. (strain OCh 114)), this protein is Lysine--tRNA ligase.